The primary structure comprises 696 residues: Elongation factor G (696 aa).

A tr-type G domain is found at 8–286 (EDVRNIGIAA…AVVAYLPAPT (279 aa)). GTP is bound by residues 17–24 (AHIDAGKT), 81–85 (DTPGH), and 135–138 (NKMD).

Belongs to the TRAFAC class translation factor GTPase superfamily. Classic translation factor GTPase family. EF-G/EF-2 subfamily.

Its subcellular location is the cytoplasm. Functionally, catalyzes the GTP-dependent ribosomal translocation step during translation elongation. During this step, the ribosome changes from the pre-translocational (PRE) to the post-translocational (POST) state as the newly formed A-site-bound peptidyl-tRNA and P-site-bound deacylated tRNA move to the P and E sites, respectively. Catalyzes the coordinated movement of the two tRNA molecules, the mRNA and conformational changes in the ribosome. This Sulfurimonas denitrificans (strain ATCC 33889 / DSM 1251) (Thiomicrospira denitrificans (strain ATCC 33889 / DSM 1251)) protein is Elongation factor G.